We begin with the raw amino-acid sequence, 190 residues long: Major intrinsically disordered NOTCH2-binding receptor 1-like (190 aa).

At serine 79 the chain carries Phosphoserine. Residues asparagine 109 and asparagine 125 are each glycosylated (N-linked (GlcNAc...) asparagine). The helical transmembrane segment at 169 to 189 (GLILLVVISILVTIVTIITFF) threads the bilayer.

Belongs to the MINAR family. Interacts with NOTCH2. As to expression, highly expressed in the auditory hair cells.

The protein localises to the lysosome membrane. Its subcellular location is the endoplasmic reticulum membrane. Binds cholesterol and may regulate the distribution and homeostasis of cholesterol in hair cells. May play a role in angiogenesis. The protein is Major intrinsically disordered NOTCH2-binding receptor 1-like of Homo sapiens (Human).